Consider the following 699-residue polypeptide: UvrABC system protein B (699 aa).

The Helicase ATP-binding domain occupies 35–188 (ERINNGEKDV…DHLLRKFVSM (154 aa)). 48 to 55 (GATGTGKS) contacts ATP. A Beta-hairpin motif is present at residues 101-124 (YYDYYQPEAYVAQTDTFIEKDSSI). The Helicase C-terminal domain maps to 438 to 604 (QIDDLLGEIR…PLRKKIADIT (167 aa)). The UVR domain maps to 654-689 (VGLIEQLTEQMHGAAAELQFEVAARIRDEVKELKRE).

It belongs to the UvrB family. Forms a heterotetramer with UvrA during the search for lesions. Interacts with UvrC in an incision complex.

The protein localises to the cytoplasm. Functionally, the UvrABC repair system catalyzes the recognition and processing of DNA lesions. A damage recognition complex composed of 2 UvrA and 2 UvrB subunits scans DNA for abnormalities. Upon binding of the UvrA(2)B(2) complex to a putative damaged site, the DNA wraps around one UvrB monomer. DNA wrap is dependent on ATP binding by UvrB and probably causes local melting of the DNA helix, facilitating insertion of UvrB beta-hairpin between the DNA strands. Then UvrB probes one DNA strand for the presence of a lesion. If a lesion is found the UvrA subunits dissociate and the UvrB-DNA preincision complex is formed. This complex is subsequently bound by UvrC and the second UvrB is released. If no lesion is found, the DNA wraps around the other UvrB subunit that will check the other stand for damage. This Paenarthrobacter aurescens (strain TC1) protein is UvrABC system protein B.